The following is a 115-amino-acid chain: Large ribosomal subunit protein uL22 (115 aa).

This sequence belongs to the universal ribosomal protein uL22 family. As to quaternary structure, part of the 50S ribosomal subunit.

In terms of biological role, this protein binds specifically to 23S rRNA; its binding is stimulated by other ribosomal proteins, e.g. L4, L17, and L20. It is important during the early stages of 50S assembly. It makes multiple contacts with different domains of the 23S rRNA in the assembled 50S subunit and ribosome. Its function is as follows. The globular domain of the protein is located near the polypeptide exit tunnel on the outside of the subunit, while an extended beta-hairpin is found that lines the wall of the exit tunnel in the center of the 70S ribosome. The protein is Large ribosomal subunit protein uL22 of Limosilactobacillus fermentum (strain NBRC 3956 / LMG 18251) (Lactobacillus fermentum).